The chain runs to 256 residues: Imidazole glycerol phosphate synthase subunit HisF (256 aa).

Catalysis depends on residues Asp13 and Asp132.

This sequence belongs to the HisA/HisF family. In terms of assembly, heterodimer of HisH and HisF.

Its subcellular location is the cytoplasm. It carries out the reaction 5-[(5-phospho-1-deoxy-D-ribulos-1-ylimino)methylamino]-1-(5-phospho-beta-D-ribosyl)imidazole-4-carboxamide + L-glutamine = D-erythro-1-(imidazol-4-yl)glycerol 3-phosphate + 5-amino-1-(5-phospho-beta-D-ribosyl)imidazole-4-carboxamide + L-glutamate + H(+). It functions in the pathway amino-acid biosynthesis; L-histidine biosynthesis; L-histidine from 5-phospho-alpha-D-ribose 1-diphosphate: step 5/9. Its function is as follows. IGPS catalyzes the conversion of PRFAR and glutamine to IGP, AICAR and glutamate. The HisF subunit catalyzes the cyclization activity that produces IGP and AICAR from PRFAR using the ammonia provided by the HisH subunit. The protein is Imidazole glycerol phosphate synthase subunit HisF of Leptospira interrogans serogroup Icterohaemorrhagiae serovar copenhageni (strain Fiocruz L1-130).